Reading from the N-terminus, the 323-residue chain is Delta(7)-sterol 5(6)-desaturase ERG3B (323 aa).

A run of 3 helical transmembrane segments spans residues 67–87 (ASILMIAGFGAAFIYVISAAL), 112–132 (IQSSFFAIPIIDLLTLPFFLG), and 150–170 (SWLAISTILYMVFNDLGIYWI). Residues 157-285 (ILYMVFNDLG…YFTWADNYWG (129 aa)) enclose the Fatty acid hydroxylase domain. Residues 171 to 175 (HRLEH) carry the Histidine box-1 motif. The Histidine box-2 signature appears at 184–188 (HKPHH). Residues 262–266 (HTLHH) carry the Histidine box-3 motif.

This sequence belongs to the sterol desaturase family.

The protein localises to the endoplasmic reticulum membrane. The enzyme catalyses episterol + 2 Fe(II)-[cytochrome b5] + O2 + 2 H(+) = 5-dehydroepisterol + 2 Fe(III)-[cytochrome b5] + 2 H2O. It participates in steroid metabolism; ergosterol biosynthesis. Functionally, C-5 sterol desaturase; part of the third module of ergosterol biosynthesis pathway that includes the late steps of the pathway. ERG3A and ERG3BB catalyze the introduction of a C-5 double bond in the B ring to produce 5-dehydroepisterol. The third module or late pathway involves the ergosterol synthesis itself through consecutive reactions that mainly occur in the endoplasmic reticulum (ER) membrane. Firstly, the squalene synthase ERG9 catalyzes the condensation of 2 farnesyl pyrophosphate moieties to form squalene, which is the precursor of all steroids. Squalene synthase is crucial for balancing the incorporation of farnesyl diphosphate (FPP) into sterol and nonsterol isoprene synthesis. Secondly, squalene is converted into lanosterol by the consecutive action of the squalene epoxidase ERG1 and the lanosterol synthase ERG7. Then, the delta(24)-sterol C-methyltransferase ERG6 methylates lanosterol at C-24 to produce eburicol. Eburicol is the substrate of the sterol 14-alpha demethylase encoded by CYP51A, CYP51B and CYP51C, to yield 4,4,24-trimethyl ergosta-8,14,24(28)-trienol. CYP51B encodes the enzyme primarily responsible for sterol 14-alpha-demethylation, and plays an essential role in ascospore formation. CYP51A encodes an additional sterol 14-alpha-demethylase, induced on ergosterol depletion and responsible for the intrinsic variation in azole sensitivity. The third CYP51 isoform, CYP51C, does not encode a sterol 14-alpha-demethylase, but is required for full virulence on host wheat ears. The C-14 reductase ERG24 then reduces the C14=C15 double bond which leads to 4,4-dimethylfecosterol. A sequence of further demethylations at C-4, involving the C-4 demethylation complex containing the C-4 methylsterol oxidases ERG25, the sterol-4-alpha-carboxylate 3-dehydrogenase ERG26 and the 3-keto-steroid reductase ERG27, leads to the production of fecosterol via 4-methylfecosterol. ERG28 has a role as a scaffold to help anchor ERG25, ERG26 and ERG27 to the endoplasmic reticulum. The C-8 sterol isomerase ERG2 then catalyzes the reaction which results in unsaturation at C-7 in the B ring of sterols and thus converts fecosterol to episterol. The sterol-C5-desaturases ERG3A and ERG3BB then catalyze the introduction of a C-5 double bond in the B ring to produce 5-dehydroepisterol. The C-22 sterol desaturases ERG5A and ERG5B further convert 5-dehydroepisterol into ergosta-5,7,22,24(28)-tetraen-3beta-ol by forming the C-22(23) double bond in the sterol side chain. Finally, ergosta-5,7,22,24(28)-tetraen-3beta-ol is substrate of the C-24(28) sterol reductase ERG4 to produce ergosterol. The protein is Delta(7)-sterol 5(6)-desaturase ERG3B of Gibberella zeae (strain ATCC MYA-4620 / CBS 123657 / FGSC 9075 / NRRL 31084 / PH-1) (Wheat head blight fungus).